An 89-amino-acid chain; its full sequence is Small ribosomal subunit protein uS15 (89 aa).

It belongs to the universal ribosomal protein uS15 family. In terms of assembly, part of the 30S ribosomal subunit. Forms a bridge to the 50S subunit in the 70S ribosome, contacting the 23S rRNA.

Functionally, one of the primary rRNA binding proteins, it binds directly to 16S rRNA where it helps nucleate assembly of the platform of the 30S subunit by binding and bridging several RNA helices of the 16S rRNA. Forms an intersubunit bridge (bridge B4) with the 23S rRNA of the 50S subunit in the ribosome. This Gluconobacter oxydans (strain 621H) (Gluconobacter suboxydans) protein is Small ribosomal subunit protein uS15.